The chain runs to 68 residues: uncharacterized protein (68 aa).

Transmembrane regions (helical) follow at residues methionine 1–proline 21 and valine 28–valine 48.

It is found in the cell membrane. This is an uncharacterized protein from Haemophilus influenzae (strain ATCC 51907 / DSM 11121 / KW20 / Rd).